The sequence spans 58 residues: Large ribosomal subunit protein eL20 (58 aa).

The segment at 37 to 58 (TTVGSQHNRKRPQIEIKEVSAA) is disordered. Over residues 48-58 (PQIEIKEVSAA) the composition is skewed to basic and acidic residues.

This sequence belongs to the eukaryotic ribosomal protein eL20 family. Part of the 50S ribosomal subunit. Binds 23S rRNA.

The polypeptide is Large ribosomal subunit protein eL20 (Halorubrum lacusprofundi (strain ATCC 49239 / DSM 5036 / JCM 8891 / ACAM 34)).